The sequence spans 335 residues: Transcriptional activator NphR (335 aa).

Positions 231 to 329 (TRVQRVIEQN…GSSPGLYRKE (99 aa)) constitute an HTH araC/xylS-type domain. 2 DNA-binding regions (H-T-H motif) span residues 249-270 (SDIA…NAEG) and 296-319 (VADV…RSTF).

In terms of biological role, transcriptional activator of nphA1 and nphA2 involved in the degradation of 4-nitrophenol (4-NP). This is Transcriptional activator NphR (nphR) from Rhodococcus sp.